A 317-amino-acid polypeptide reads, in one-letter code: MRSSRSAKVSLVGAGNIGGALAHMLGASQVVKELVLVDVAGGMTEGKVLDVGQALALLGSDVYITGGSDYAAIEHSDAVVVTAGIPRKEGMSREDLLNTNAAVVRNIAENIAKYSPGALVIVVTNPLDAMVWCMYKYSGLPANRVVGMAGVLDSARFSFFLARHMNVSVSSVSAMVLGGHGDLMLPLLRYSTVGGVPVESLIESGRLNRDDIAAIVERTRKGGEEIVKLLKTGSAYCAPAASCAHMLESYVRDKRSIMPCSAYLDGQYGVRDLFVGVPVIIGEKGVEEVVEFPLTAEEQAVFDQSVELIRGSVSAIS.

NAD(+) is bound by residues 13-18 (GAGNIG) and Asp38. Residues Arg87 and Arg93 each contribute to the substrate site. NAD(+) is bound by residues Asn100 and 123–125 (VTN). Substrate contacts are provided by Asn125 and Arg156. His180 serves as the catalytic Proton acceptor.

This sequence belongs to the LDH/MDH superfamily. MDH type 3 family.

The enzyme catalyses (S)-malate + NAD(+) = oxaloacetate + NADH + H(+). In terms of biological role, catalyzes the reversible oxidation of malate to oxaloacetate. The sequence is that of Malate dehydrogenase from Anaplasma marginale (strain St. Maries).